A 223-amino-acid chain; its full sequence is Large ribosomal subunit protein bL21 (223 aa).

This sequence belongs to the bacterial ribosomal protein bL21 family. In terms of assembly, part of the 50S ribosomal subunit. Contacts protein L20.

Its function is as follows. This protein binds to 23S rRNA in the presence of protein L20. This is Large ribosomal subunit protein bL21 from Mesorhizobium japonicum (strain LMG 29417 / CECT 9101 / MAFF 303099) (Mesorhizobium loti (strain MAFF 303099)).